Reading from the N-terminus, the 362-residue chain is Histidinol-phosphate aminotransferase (362 aa).

K218 carries the N6-(pyridoxal phosphate)lysine modification.

Belongs to the class-II pyridoxal-phosphate-dependent aminotransferase family. Histidinol-phosphate aminotransferase subfamily. Homodimer. Pyridoxal 5'-phosphate serves as cofactor.

The enzyme catalyses L-histidinol phosphate + 2-oxoglutarate = 3-(imidazol-4-yl)-2-oxopropyl phosphate + L-glutamate. The protein operates within amino-acid biosynthesis; L-histidine biosynthesis; L-histidine from 5-phospho-alpha-D-ribose 1-diphosphate: step 7/9. In Ruegeria sp. (strain TM1040) (Silicibacter sp.), this protein is Histidinol-phosphate aminotransferase.